Consider the following 135-residue polypeptide: Retinol-binding protein 5 (135 aa).

This sequence belongs to the calycin superfamily. Fatty-acid binding protein (FABP) family. As to expression, kidney.

It is found in the cytoplasm. In terms of biological role, intracellular transport of retinol. In Bos taurus (Bovine), this protein is Retinol-binding protein 5 (RBP5).